Reading from the N-terminus, the 381-residue chain is p55-v-Fos-transforming protein (381 aa).

Residues glutamate 137 to histidine 200 form the bZIP domain. The segment at lysine 139–arginine 159 is basic motif. The leucine-zipper stretch occupies residues leucine 165–leucine 193.

It belongs to the bZIP family. Fos subfamily.

The protein resides in the host nucleus. The chain is p55-v-Fos-transforming protein (V-FOS) from Mus musculus (Mouse).